Consider the following 110-residue polypeptide: Large ribosomal subunit protein uL22 (110 aa).

The protein belongs to the universal ribosomal protein uL22 family. Part of the 50S ribosomal subunit.

Functionally, this protein binds specifically to 23S rRNA; its binding is stimulated by other ribosomal proteins, e.g. L4, L17, and L20. It is important during the early stages of 50S assembly. It makes multiple contacts with different domains of the 23S rRNA in the assembled 50S subunit and ribosome. The globular domain of the protein is located near the polypeptide exit tunnel on the outside of the subunit, while an extended beta-hairpin is found that lines the wall of the exit tunnel in the center of the 70S ribosome. In Syntrophus aciditrophicus (strain SB), this protein is Large ribosomal subunit protein uL22.